Reading from the N-terminus, the 130-residue chain is MRMHFVVMVMLLPALMMAGSECRSSCRLTNISITVESEECGSCITIDTTACAGLCKTQESVYRSPLMLSYQNTCNFREWTYETYEFKGCPARADSVFTYPVALSCECSKCNSDITDCGALSQQTLSCNAH.

The signal sequence occupies residues Met-1–Ala-18. 5 cysteine pairs are disulfide-bonded: Cys-26–Cys-74, Cys-40–Cys-89, Cys-51–Cys-105, Cys-55–Cys-107, and Cys-110–Cys-117. Asn-30 carries an N-linked (GlcNAc...) asparagine glycan.

The protein belongs to the glycoprotein hormones subunit beta family. In terms of assembly, heterodimer of an alpha and a beta chain.

The protein resides in the secreted. Its function is as follows. Involved in gametogenesis and steroidogenesis. The protein is Gonadotropin subunit beta-1 (cgba) of Cyprinus carpio (Common carp).